Reading from the N-terminus, the 539-residue chain is Acid-sensing ion channel 4 (539 aa).

Residues 1–68 (MPIEIVCKIK…GPGPHGLRRT (68 aa)) lie on the Cytoplasmic side of the membrane. The helical transmembrane segment at 69 to 89 (LWALALLTSLAAFLYQAAGLA) threads the bilayer. The Extracellular segment spans residues 90–438 (RGYLTRPHLV…EQRAAYGLSA (349 aa)). 2 disulfides stabilise this stretch: Cys-118–Cys-202 and Cys-180–Cys-187. N-linked (GlcNAc...) asparagine glycosylation is found at Asn-191 and Asn-243. 5 disulfides stabilise this stretch: Cys-296–Cys-375, Cys-318–Cys-371, Cys-322–Cys-369, Cys-331–Cys-353, and Cys-333–Cys-345. Asn-376 carries an N-linked (GlcNAc...) asparagine glycan. A helical transmembrane segment spans residues 439-459 (LLGDLGGQMGLFIGASILTLL). The GAS motif; ion selectivity filter motif lies at 452-454 (GAS). Residues 460–539 (EILDYIYEVS…PGGLFEDFAC (80 aa)) lie on the Cytoplasmic side of the membrane. Positions 501–531 (EQSPCPSRGRVEGGGVSSLLPNHHHPHGPPG) are disordered.

It belongs to the amiloride-sensitive sodium channel (TC 1.A.6) family. ASIC4 subfamily. As to quaternary structure, homotrimer. Heterotrimer; with other ASIC proteins producing functional channels. Expressed in pituitary gland. Weakly expressed in brain, vestibular system and organ of Corti.

Its subcellular location is the cell membrane. Functionally, does not exhibit measurable stand-alone pH-gated sodium channel activity but may form pH-gated heterotrimeric sodium channels. Its activity could also depend on alternative gating mechanisms. In Homo sapiens (Human), this protein is Acid-sensing ion channel 4.